A 171-amino-acid polypeptide reads, in one-letter code: S-ribosylhomocysteine lyase (171 aa).

Fe cation contacts are provided by His54, His58, and Cys128.

This sequence belongs to the LuxS family. In terms of assembly, homodimer. Requires Fe cation as cofactor.

The catalysed reaction is S-(5-deoxy-D-ribos-5-yl)-L-homocysteine = (S)-4,5-dihydroxypentane-2,3-dione + L-homocysteine. Involved in the synthesis of autoinducer 2 (AI-2) which is secreted by bacteria and is used to communicate both the cell density and the metabolic potential of the environment. The regulation of gene expression in response to changes in cell density is called quorum sensing. Catalyzes the transformation of S-ribosylhomocysteine (RHC) to homocysteine (HC) and 4,5-dihydroxy-2,3-pentadione (DPD). This Campylobacter concisus (strain 13826) protein is S-ribosylhomocysteine lyase.